Here is a 286-residue protein sequence, read N- to C-terminus: Transcription factor bHLH11 (286 aa).

A disordered region spans residues 1 to 34 (MDQPMKPKTCSESDFADDSSASSSSSSGQNLRGA). The span at 18-27 (DSSASSSSSS) shows a compositional bias: low complexity. One can recognise a bHLH domain in the interval 44–94 (AVCSQKAEREKLRRDKLKEQFLELGNALDPNRPKSDKASVLTDTIQMLKDV). Disordered regions lie at residues 182-202 (EQQASVQQHSSSSADASMKQD) and 244-286 (QQDV…MLKP). 2 stretches are compositionally biased toward low complexity: residues 183 to 198 (QQASVQQHSSSSADAS) and 255 to 269 (SLTTTASSSNSYSLS). Over residues 270-279 (QAVQDSSPGT) the composition is skewed to polar residues.

In terms of assembly, homodimer. Expressed consitutively in roots, leaves, stems, and flowers.

The protein resides in the nucleus. The polypeptide is Transcription factor bHLH11 (BHLH11) (Arabidopsis thaliana (Mouse-ear cress)).